Consider the following 559-residue polypeptide: CTP synthase (559 aa).

Residues 1–270 (MTKFVFVTGG…DGLICDKLRL (270 aa)) form an amidoligase domain region. Residue Ser13 participates in CTP binding. Ser13 lines the UTP pocket. Residues 14–19 (SLGKGI) and Asp71 contribute to the ATP site. Asp71 and Glu144 together coordinate Mg(2+). CTP contacts are provided by residues 151–153 (DIE), 191–196 (KTKPTQ), and Lys227. Residues 191-196 (KTKPTQ) and Lys227 contribute to the UTP site. The region spanning 295–548 (TIAMVGKYVD…IKAAIDHQKS (254 aa)) is the Glutamine amidotransferase type-1 domain. Gly357 lines the L-glutamine pocket. The Nucleophile; for glutamine hydrolysis role is filled by Cys384. L-glutamine-binding positions include 385–388 (LGMQ), Glu408, and Arg474. Catalysis depends on residues His521 and Glu523.

It belongs to the CTP synthase family. Homotetramer.

The catalysed reaction is UTP + L-glutamine + ATP + H2O = CTP + L-glutamate + ADP + phosphate + 2 H(+). It carries out the reaction L-glutamine + H2O = L-glutamate + NH4(+). The enzyme catalyses UTP + NH4(+) + ATP = CTP + ADP + phosphate + 2 H(+). The protein operates within pyrimidine metabolism; CTP biosynthesis via de novo pathway; CTP from UDP: step 2/2. Allosterically activated by GTP, when glutamine is the substrate; GTP has no effect on the reaction when ammonia is the substrate. The allosteric effector GTP functions by stabilizing the protein conformation that binds the tetrahedral intermediate(s) formed during glutamine hydrolysis. Inhibited by the product CTP, via allosteric rather than competitive inhibition. Functionally, catalyzes the ATP-dependent amination of UTP to CTP with either L-glutamine or ammonia as the source of nitrogen. Regulates intracellular CTP levels through interactions with the four ribonucleotide triphosphates. This is CTP synthase from Paracidovorax citrulli (strain AAC00-1) (Acidovorax citrulli).